The primary structure comprises 463 residues: UDP-N-acetylmuramoyl-L-alanyl-D-glutamate--2,6-diaminopimelate ligase (463 aa).

Thr21 lines the UDP-N-acetyl-alpha-D-muramoyl-L-alanyl-D-glutamate pocket. 94-100 (GTNGKTT) serves as a coordination point for ATP. Residues 137 to 138 (TT), Ser164, Gln170, and Arg172 contribute to the UDP-N-acetyl-alpha-D-muramoyl-L-alanyl-D-glutamate site. Position 204 is an N6-carboxylysine (Lys204). Meso-2,6-diaminopimelate contacts are provided by residues Arg358, 382-385 (DNPR), Gly433, and Glu437. The Meso-diaminopimelate recognition motif motif lies at 382 to 385 (DNPR).

It belongs to the MurCDEF family. MurE subfamily. Mg(2+) is required as a cofactor. Post-translationally, carboxylation is probably crucial for Mg(2+) binding and, consequently, for the gamma-phosphate positioning of ATP.

The protein resides in the cytoplasm. The catalysed reaction is UDP-N-acetyl-alpha-D-muramoyl-L-alanyl-D-glutamate + meso-2,6-diaminopimelate + ATP = UDP-N-acetyl-alpha-D-muramoyl-L-alanyl-gamma-D-glutamyl-meso-2,6-diaminopimelate + ADP + phosphate + H(+). It participates in cell wall biogenesis; peptidoglycan biosynthesis. In terms of biological role, catalyzes the addition of meso-diaminopimelic acid to the nucleotide precursor UDP-N-acetylmuramoyl-L-alanyl-D-glutamate (UMAG) in the biosynthesis of bacterial cell-wall peptidoglycan. This chain is UDP-N-acetylmuramoyl-L-alanyl-D-glutamate--2,6-diaminopimelate ligase, found in Helicobacter hepaticus (strain ATCC 51449 / 3B1).